The primary structure comprises 246 residues: Enolase-phosphatase E1 (246 aa).

Mg(2+) is bound by residues D11 and E13. Residues 140–141 (SS) and K174 contribute to the substrate site. D199 contacts Mg(2+).

It belongs to the HAD-like hydrolase superfamily. MasA/MtnC family. As to quaternary structure, monomer. The cofactor is Mg(2+).

It is found in the cytoplasm. Its subcellular location is the nucleus. The catalysed reaction is 5-methylsulfanyl-2,3-dioxopentyl phosphate + H2O = 1,2-dihydroxy-5-(methylsulfanyl)pent-1-en-3-one + phosphate. It functions in the pathway amino-acid biosynthesis; L-methionine biosynthesis via salvage pathway; L-methionine from S-methyl-5-thio-alpha-D-ribose 1-phosphate: step 3/6. The protein operates within amino-acid biosynthesis; L-methionine biosynthesis via salvage pathway; L-methionine from S-methyl-5-thio-alpha-D-ribose 1-phosphate: step 4/6. Functionally, bifunctional enzyme that catalyzes the enolization of 2,3-diketo-5-methylthiopentyl-1-phosphate (DK-MTP-1-P) into the intermediate 2-hydroxy-3-keto-5-methylthiopentenyl-1-phosphate (HK-MTPenyl-1-P), which is then dephosphorylated to form the acireductone 1,2-dihydroxy-3-keto-5-methylthiopentene (DHK-MTPene). The protein is Enolase-phosphatase E1 of Acyrthosiphon pisum (Pea aphid).